The chain runs to 54 residues: Beta-2-microglobulin (54 aa).

Residues 3–41 (KVELSDLSFNKDWSFYLLAHREFVPTATDKYACRVSHIT) enclose the Ig-like C1-type domain.

Belongs to the beta-2-microglobulin family. Heterodimer of an alpha chain and a beta chain. Beta-2-microglobulin is the beta-chain of major histocompatibility complex class I molecules.

The protein resides in the secreted. Its function is as follows. Component of the class I major histocompatibility complex (MHC). Involved in the presentation of peptide antigens to the immune system. This is Beta-2-microglobulin (B2M) from Mesocricetus auratus (Golden hamster).